A 474-amino-acid chain; its full sequence is Probable phenylalanine--tRNA ligase alpha subunit (474 aa).

The contains the major tRNA-Phe binding sites stretch occupies residues 1-150 (MSLSQKILEL…KRKLIYQAKE (150 aa)). L-phenylalanine-binding positions include threonine 308, 350-352 (QVE), and tyrosine 390. Mg(2+) is bound at residue glutamate 392. L-phenylalanine is bound at residue phenylalanine 416.

It belongs to the class-II aminoacyl-tRNA synthetase family. Phe-tRNA synthetase alpha subunit type 2 subfamily. Tetramer of two alpha and two beta subunits. Mg(2+) is required as a cofactor.

The protein localises to the cytoplasm. The enzyme catalyses tRNA(Phe) + L-phenylalanine + ATP = L-phenylalanyl-tRNA(Phe) + AMP + diphosphate + H(+). This Vairimorpha ceranae (strain BRL01) (Microsporidian parasite) protein is Probable phenylalanine--tRNA ligase alpha subunit.